The following is a 105-amino-acid chain: Integration host factor subunit alpha (105 aa).

Belongs to the bacterial histone-like protein family. As to quaternary structure, heterodimer of an alpha and a beta chain.

Functionally, this protein is one of the two subunits of integration host factor, a specific DNA-binding protein that functions in genetic recombination as well as in transcriptional and translational control. The chain is Integration host factor subunit alpha from Xanthobacter autotrophicus (strain ATCC BAA-1158 / Py2).